A 183-amino-acid polypeptide reads, in one-letter code: Neuronal synaptobrevin (183 aa).

Residues 1–17 are compositionally biased toward low complexity; the sequence is MADAAPAGDAPPNAGAP. Positions 1–32 are disordered; sequence MADAAPAGDAPPNAGAPAGEGGDGEIVGGPHN. The Cytoplasmic portion of the chain corresponds to 1–106; the sequence is MADAAPAGDA…KFWLQNLKMM (106 aa). Residues 18-27 show a composition bias toward gly residues; it reads AGEGGDGEIV. The v-SNARE coiled-coil homology domain occupies 41 to 101; it reads RLQQTQAQVD…GKLKRKFWLQ (61 aa). A helical transmembrane segment spans residues 107 to 127; the sequence is IIMGVIGLVVVGIIANKLGLI. The Vesicular portion of the chain corresponds to 128-183; the sequence is GGEQPPQYQYPPQYMQPPPPPPQQPAGGQSSLVDAAGAGDGAGAGGSAGAGDHGGV. The segment at 135–183 is disordered; the sequence is YQYPPQYMQPPPPPPQQPAGGQSSLVDAAGAGDGAGAGGSAGAGDHGGV. The segment covering 141–151 has biased composition (pro residues); that stretch reads YMQPPPPPPQQ. Positions 165 to 183 are enriched in gly residues; that stretch reads AGDGAGAGGSAGAGDHGGV.

Belongs to the synaptobrevin family. Part of the SNARE core complex containing Snap25 and syntaxin. Specifically expressed in neurons and synapses.

The protein resides in the cytoplasmic vesicle. It localises to the secretory vesicle. The protein localises to the synaptic vesicle membrane. Its subcellular location is the early endosome membrane. In terms of biological role, involved in the targeting and/or fusion of transport vesicles to their target membrane. Major SNARE protein of synaptic vesicles which mediates fusion of synaptic vesicles to release neurotransmitters. Essential for fast vesicular exocytosis and activity-dependent neurotransmitter release as well as fast endocytosis that mediates rapid reuse of synaptic vesicles. Also involved in a neuron-specific sort-and-degrade mechanism that promotes endolysosomal degradation and is required for neuronal maintenance. The protein is Neuronal synaptobrevin of Drosophila melanogaster (Fruit fly).